A 375-amino-acid chain; its full sequence is N-acetylneuraminate epimerase (375 aa).

The N-terminal stretch at 1–22 (MKLTKTALCTALFATFTFSANA) is a signal peptide. 7 Kelch repeats span residues 43 to 87 (TVYV…AAVD), 89 to 140 (KLYV…ASHG), 142 to 176 (KVYILGGSNLSIFNGFFQDNVAAGEDKGKKDEIVA), 177 to 222 (AYFD…TIQG), 225 to 273 (LVVV…LAGA), 295 to 344 (KQFK…SYNN), and 346 to 375 (VLLIGGETDGGKALTSVKAISYDGKKLTVE). Glutamate 231 (proton acceptor) is an active-site residue.

Belongs to the NanM family. In terms of assembly, homodimer.

Its subcellular location is the periplasm. It carries out the reaction N-acetyl-alpha-neuraminate = N-acetyl-beta-neuraminate. Its function is as follows. Converts alpha-N-acetylneuranimic acid (Neu5Ac) to the beta-anomer, accelerating the equilibrium between the alpha- and beta-anomers. Probably facilitates sialidase-negative bacteria to compete successfully for limited amounts of extracellular Neu5Ac, which is likely taken up in the beta-anomer. In addition, the rapid removal of sialic acid from solution might be advantageous to the bacterium to damp down host responses. The chain is N-acetylneuraminate epimerase from Haemophilus influenzae (strain 86-028NP).